The chain runs to 136 residues: Large ribosomal subunit protein uL16 (136 aa).

It belongs to the universal ribosomal protein uL16 family. As to quaternary structure, part of the 50S ribosomal subunit.

Its function is as follows. Binds 23S rRNA and is also seen to make contacts with the A and possibly P site tRNAs. The sequence is that of Large ribosomal subunit protein uL16 from Aliivibrio salmonicida (strain LFI1238) (Vibrio salmonicida (strain LFI1238)).